A 234-amino-acid chain; its full sequence is Ribosome maturation protein SDO1 homolog (234 aa).

The protein belongs to the SDO1/SBDS family.

The protein is Ribosome maturation protein SDO1 homolog of Archaeoglobus fulgidus (strain ATCC 49558 / DSM 4304 / JCM 9628 / NBRC 100126 / VC-16).